Here is a 180-residue protein sequence, read N- to C-terminus: NADH-quinone oxidoreductase subunit I (180 aa).

2 consecutive 4Fe-4S ferredoxin-type domains span residues 48–80 (IVLT…LQKA) and 90–119 (EFFR…LTPD). [4Fe-4S] cluster contacts are provided by Cys-60, Cys-63, Cys-66, Cys-70, Cys-99, Cys-102, Cys-105, and Cys-109. Residues 160 to 180 (GKPKGSAQKEAAPIDVKSILP) form a disordered region.

Belongs to the complex I 23 kDa subunit family. As to quaternary structure, NDH-1 is composed of 14 different subunits. Subunits NuoA, H, J, K, L, M, N constitute the membrane sector of the complex. [4Fe-4S] cluster serves as cofactor.

It is found in the cell inner membrane. The enzyme catalyses a quinone + NADH + 5 H(+)(in) = a quinol + NAD(+) + 4 H(+)(out). Functionally, NDH-1 shuttles electrons from NADH, via FMN and iron-sulfur (Fe-S) centers, to quinones in the respiratory chain. The immediate electron acceptor for the enzyme in this species is believed to be ubiquinone. Couples the redox reaction to proton translocation (for every two electrons transferred, four hydrogen ions are translocated across the cytoplasmic membrane), and thus conserves the redox energy in a proton gradient. The protein is NADH-quinone oxidoreductase subunit I of Tolumonas auensis (strain DSM 9187 / NBRC 110442 / TA 4).